The sequence spans 138 residues: MISLTDTQKIGMGLTGFGVFFLFFGMILFFDKALLAIGNVLFVAGLAFVIGLERTFRFFFQKHKMKATGFFLGGVFVVLIGWPLIGMIFEIYGFFLLFRGFFPVVVGFIRRVPVLGSLLNLPGIRSFVDKVGESNNMV.

M1 carries the N-acetylmethionine modification. Residues 1 to 9 (MISLTDTQK) lie on the Cytoplasmic side of the membrane. Residues 10-30 (IGMGLTGFGVFFLFFGMILFF) traverse the membrane as a helical segment. Residues 31-32 (DK) lie on the Lumenal side of the membrane. The chain crosses the membrane as a helical span at residues 33–53 (ALLAIGNVLFVAGLAFVIGLE). Residues 54-68 (RTFRFFFQKHKMKAT) lie on the Cytoplasmic side of the membrane. A helical transmembrane segment spans residues 69–89 (GFFLGGVFVVLIGWPLIGMIF). Position 90 (E90) is a topological domain, lumenal. Residues 91–109 (IYGFFLLFRGFFPVVVGFI) form a helical membrane-spanning segment. Over 110-138 (RRVPVLGSLLNLPGIRSFVDKVGESNNMV) the chain is Cytoplasmic.

Belongs to the GOT1 family.

It localises to the golgi apparatus membrane. Its function is as follows. May be involved in fusion of ER-derived transport vesicles with the Golgi complex. The chain is Vesicle transport protein GOT1B from Bos taurus (Bovine).